A 282-amino-acid polypeptide reads, in one-letter code: 4-diphosphocytidyl-2-C-methyl-D-erythritol kinase (282 aa).

Lys9 is an active-site residue. An ATP-binding site is contributed by 98-108 (PMGGGLGGGSS). The active site involves Asp140.

It belongs to the GHMP kinase family. IspE subfamily. In terms of assembly, homodimer.

The enzyme catalyses 4-CDP-2-C-methyl-D-erythritol + ATP = 4-CDP-2-C-methyl-D-erythritol 2-phosphate + ADP + H(+). Its pathway is isoprenoid biosynthesis; isopentenyl diphosphate biosynthesis via DXP pathway; isopentenyl diphosphate from 1-deoxy-D-xylulose 5-phosphate: step 3/6. Functionally, catalyzes the phosphorylation of the position 2 hydroxy group of 4-diphosphocytidyl-2C-methyl-D-erythritol. The sequence is that of 4-diphosphocytidyl-2-C-methyl-D-erythritol kinase from Salmonella agona (strain SL483).